The following is a 48-amino-acid chain: Lantibiotic salivaricin-A (48 aa).

Residues 1-26 constitute a propeptide that is removed on maturation; it reads MKNSKDILNNAIEEVSEKELMEVAGG. 2 consecutive cross-links (beta-methyllanthionine (Thr-Cys)) follow at residues 35 to 40 and 37 to 47; these read TITDDC and TDDCPNSVFVC. The lanthionine (Ser-Cys) cross-link spans 43–48; it reads SVFVCC.

This sequence belongs to the type A lantibiotic family. In terms of processing, maturation of lantibiotics involves the enzymatic conversion of Thr, and Ser into dehydrated AA and the formation of thioether bonds with cysteine. This is followed by membrane translocation and cleavage of the modified precursor.

Its function is as follows. Lanthionine-containing peptide antibiotic (lantibiotic) active on Gram-positive bacteria. The bactericidal activity of lantibiotics is based on depolarization of energized bacterial cytoplasmic membranes, initiated by the formation of aqueous transmembrane pores. The protein is Lantibiotic salivaricin-A (salA) of Streptococcus salivarius.